A 512-amino-acid chain; its full sequence is Cytochrome P450 76C1 (512 aa).

The chain crosses the membrane as a helical span at residues I3–F23. Heme is bound at residue C450.

Belongs to the cytochrome P450 family. It depends on heme as a cofactor.

The protein resides in the membrane. The sequence is that of Cytochrome P450 76C1 (CYP76C1) from Arabidopsis thaliana (Mouse-ear cress).